Reading from the N-terminus, the 364-residue chain is MLNPSIERKLEGLVERYQEVQALLGEPDVISDQNRFRSLSREYSQLEEVVGCFEEYRQNQDDQAAAKDMAEDDDAEMREMAEEELKEARKAEEELENRLQLLLLPKDPNDDRSCYLEIRAGAGGDEASIFAGDLFRMYSRYAEKNGWKVNIVSASDGEHGGYKEIIAHMSGDGVYGRMKFESGGHRVQRVPETESQGRIHTSACTVAVLPEIPEAEAVEINPADLRVDTYRASGAGGQHVNRTDSAIRLTHIPTGVVVECQEERSQHKNRAKAMSVLQARIQRLEDEKRQAEEDSTRRNLVGSGDRSERIRTYNYPQSRVTDHRINLTLYRLDEVLTGDIDLILDAIITEHQADQLAALSEGQQ.

Gln-238 carries the N5-methylglutamine modification. A compositionally biased stretch (basic and acidic residues) spans 286-297 (DEKRQAEEDSTR). Residues 286-315 (DEKRQAEEDSTRRNLVGSGDRSERIRTYNY) are disordered.

It belongs to the prokaryotic/mitochondrial release factor family. Methylated by PrmC. Methylation increases the termination efficiency of RF1.

The protein resides in the cytoplasm. Its function is as follows. Peptide chain release factor 1 directs the termination of translation in response to the peptide chain termination codons UAG and UAA. This is Peptide chain release factor 1 from Idiomarina loihiensis (strain ATCC BAA-735 / DSM 15497 / L2-TR).